Consider the following 498-residue polypeptide: Polyamine aminopropyltransferase (498 aa).

6 helical membrane passes run 7-27, 35-55, 67-87, 97-117, 134-154, and 163-183; these read ISVLIISSCGLVYELLAGTIA, VTQFSLIIGTYLFSMGVGSWL, FLEIELAIGLVGGFSSAILYL, IPLFLLVILIGILVGLEIPVL, VLSLDYVGALLASILFPIFFA, and GFIFGILNVGVALWGTWVLPL. A spermidine synthase region spans residues 196–446; the sequence is VVVLTLLILG…AGQRPIQFKK (251 aa). Positions 200-439 constitute a PABS domain; sequence TLLILGFSYS…GEWGFVLAGQ (240 aa). Residue glutamine 234 participates in S-methyl-5'-thioadenosine binding. Residues histidine 264 and aspartate 288 each contribute to the spermidine site. S-methyl-5'-thioadenosine contacts are provided by residues aspartate 308 and 342–343; that span reads DA. The active-site Proton acceptor is the aspartate 360.

It belongs to the spermidine/spermine synthase family. As to quaternary structure, homodimer or homotetramer.

The protein resides in the cell membrane. It catalyses the reaction S-adenosyl 3-(methylsulfanyl)propylamine + putrescine = S-methyl-5'-thioadenosine + spermidine + H(+). It participates in amine and polyamine biosynthesis; spermidine biosynthesis; spermidine from putrescine: step 1/1. Its function is as follows. Catalyzes the irreversible transfer of a propylamine group from the amino donor S-adenosylmethioninamine (decarboxy-AdoMet) to putrescine (1,4-diaminobutane) to yield spermidine. This is Polyamine aminopropyltransferase from Leptospira interrogans serogroup Icterohaemorrhagiae serovar copenhageni (strain Fiocruz L1-130).